The primary structure comprises 655 residues: E3 ubiquitin-protein ligase TRIM32 (655 aa).

The RING-type zinc finger occupies 21 to 66 (CPICMESFTEEQLRPKLLHCGHTICRQCLEKLLASSINGVRCPFCS). Serine 56 bears the Phosphoserine; by CHEK2 mark. The segment at 96-139 (VGLLMCRGCGRRLPRQFCRSCGVVLCEPCREADHQPPGHCTLPV) adopts a B box-type; atypical zinc-finger fold. Cysteine 101, cysteine 104, cysteine 124, and histidine 129 together coordinate Zn(2+). Residues 139–198 (VKEAAEERRRDFGEKLTRLRELTGELQRRKAALEGVSRDLQARYKAVLQEYGHEERRIQE) are a coiled coil. A disordered region spans residues 327 to 347 (MDMSPEEVAPSPRASPAKQRS). Phosphoserine is present on residues serine 330, serine 337, and serine 341. NHL repeat units follow at residues 360 to 403 (LKKM…FNRK), 417 to 460 (DSFV…YTMD), 461 to 501 (GHCV…FTVD), 564 to 607 (GRQI…FPKG), and 608 to 648 (GGYS…YSYH).

The protein belongs to the TRIM/RBCC family. As to quaternary structure, it self-associates. Interacts with DTNBP1. Interacts with PIAS4/PIASY upon treatment with UVB and TNF-alpha. Interacts with AMBRA1; promoting activation of ULK1 through unanchored 'Lys-63'-linked polyubiquitin chains. Interacts with TICAM1 and TAX1BP1; these interactions target TICAM1 to TAX1BP1-mediated selective autophagic degradation. In terms of processing, ubiquitinated. Phosphorylation at Ser-56 by CHEK2 under oxidative stress, activates the E3 ligase activity and promotes ATG7 ubiquitination leading to positive regulation of the autophagosme assembly. As to expression, ubiquitous. High expression in brain.

Its subcellular location is the cytoplasm. It carries out the reaction S-ubiquitinyl-[E2 ubiquitin-conjugating enzyme]-L-cysteine + [acceptor protein]-L-lysine = [E2 ubiquitin-conjugating enzyme]-L-cysteine + N(6)-ubiquitinyl-[acceptor protein]-L-lysine.. Its pathway is protein modification; protein ubiquitination. Functionally, E3 ubiquitin ligase that plays a role in various biological processes including neural stem cell differentiation, innate immunity, inflammatory resonse and autophagy. Plays a role in virus-triggered induction of IFN-beta and TNF-alpha by mediating the ubiquitination of STING1. Mechanistically, targets STING1 for 'Lys-63'-linked ubiquitination which promotes the interaction of STING1 with TBK1. Regulates bacterial clearance and promotes autophagy in Mycobacterium tuberculosis-infected macrophages. Negatively regulates TLR3/4-mediated innate immune and inflammatory response by triggering the autophagic degradation of TICAM1 in an E3 activity-independent manner. Plays an essential role in oxidative stress induced cell death by inducing loss of transmembrane potential and enhancing mitochondrial reactive oxygen species (ROS) production during oxidative stress conditions. Ubiquitinates XIAP and targets it for proteasomal degradation. Ubiquitinates DTNBP1 (dysbindin) and promotes its degradation. May ubiquitinate BBS2. Ubiquitinates PIAS4/PIASY and promotes its degradation in keratinocytes treated with UVB and TNF-alpha. Also acts as a regulator of autophagy by mediating formation of unanchored 'Lys-63'-linked polyubiquitin chains that activate ULK1: interaction with AMBRA1 is required for ULK1 activation. Positively regulates dendritic branching by promoting ubiquitination and subsequent degradation of the epigenetic factor CDYL. Under metabolic stress and phosphorylation by CHK2, mediates 'Lys-63'-linked ubiquitination of ATG7 at 'Lys-41' to initiate autophagy. In Mus musculus (Mouse), this protein is E3 ubiquitin-protein ligase TRIM32.